The following is a 104-amino-acid chain: ATP-dependent Clp protease adapter protein ClpS (104 aa).

The protein belongs to the ClpS family. In terms of assembly, binds to the N-terminal domain of the chaperone ClpA.

Functionally, involved in the modulation of the specificity of the ClpAP-mediated ATP-dependent protein degradation. The protein is ATP-dependent Clp protease adapter protein ClpS of Nitratidesulfovibrio vulgaris (strain ATCC 29579 / DSM 644 / CCUG 34227 / NCIMB 8303 / VKM B-1760 / Hildenborough) (Desulfovibrio vulgaris).